The chain runs to 526 residues: Acetyl-CoA hydrolase (526 aa).

At Thr-2 the chain carries N-acetylthreonine. Gly-277 to Ile-281 lines the CoA pocket. The active-site 5-glutamyl coenzyme A thioester intermediate is the Glu-302. Residue Ser-350 is modified to Phosphoserine. Positions 392 and 396 each coordinate CoA.

Belongs to the acetyl-CoA hydrolase/transferase family. In terms of assembly, monomer. Post-translationally, glycosylated; contains mannose.

It localises to the cytoplasm. The enzyme catalyses acetyl-CoA + H2O = acetate + CoA + H(+). Its function is as follows. Presumably involved in regulating the intracellular acetyl-CoA pool for fatty acid and cholesterol synthesis and fatty acid oxidation. It may be involved in overall regulation of acetylation during melatonin synthesis. In Saccharomyces cerevisiae (strain ATCC 204508 / S288c) (Baker's yeast), this protein is Acetyl-CoA hydrolase (ACH1).